A 395-amino-acid chain; its full sequence is S-adenosylmethionine synthase (395 aa).

Position 14 (His14) interacts with ATP. A Mg(2+)-binding site is contributed by Asp16. Residue Glu42 coordinates K(+). Residues Glu55 and Gln98 each contribute to the L-methionine site. Residues 98 to 108 (QSPDIALGVDK) form a flexible loop region. ATP is bound by residues 175-177 (DGK), 242-243 (RF), Asp251, 257-258 (RK), Ala274, and Lys278. Asp251 is a binding site for L-methionine. Lys282 lines the L-methionine pocket.

Belongs to the AdoMet synthase family. As to quaternary structure, homotetramer; dimer of dimers. Mg(2+) is required as a cofactor. It depends on K(+) as a cofactor.

The protein resides in the cytoplasm. The enzyme catalyses L-methionine + ATP + H2O = S-adenosyl-L-methionine + phosphate + diphosphate. The protein operates within amino-acid biosynthesis; S-adenosyl-L-methionine biosynthesis; S-adenosyl-L-methionine from L-methionine: step 1/1. In terms of biological role, catalyzes the formation of S-adenosylmethionine (AdoMet) from methionine and ATP. The overall synthetic reaction is composed of two sequential steps, AdoMet formation and the subsequent tripolyphosphate hydrolysis which occurs prior to release of AdoMet from the enzyme. The polypeptide is S-adenosylmethionine synthase (Thermosipho africanus (strain TCF52B)).